We begin with the raw amino-acid sequence, 619 residues long: Frizzled and smoothened-like protein L (619 aa).

An N-terminal signal peptide occupies residues 1-24 (MITNKSKYYFFLILIFINFYLINC). N-linked (GlcNAc...) asparagine glycans are attached at residues N4, N63, N112, N143, N159, N184, and N203. Residues 25 to 245 (QEEYPIDQTG…KQWDRLYDLS (221 aa)) are Extracellular-facing. The 139-residue stretch at 31 to 169 (DQTGKCEPYI…YSIYDLSLVN (139 aa)) folds into the FZ domain. Cystine bridges form between C36-C106 and C48-C99. A helical transmembrane segment spans residues 246–266 (NSLSVLSCVGTLFLLFTFNIL). Topologically, residues 267 to 278 (NKKINRFDRMNS) are cytoplasmic. A helical membrane pass occupies residues 279-299 (LFNGSVFMMSLSGVIILFAGG). At 300 to 321 (PRALIKDGGARISVWQDPLCSA) the chain is on the extracellular side. Residues 322 to 342 (TGFIFQLFSIAAILFWVVMSF) form a helical membrane-spanning segment. Topologically, residues 343-358 (ELWYKIKFMTKKLDLK) are cytoplasmic. Residues 359–379 (KYYIPFIIIVSLVFSIIPLAT) form a helical membrane-spanning segment. Residues 380–402 (KNYRMIRGNMHCWVHTTKLQNSL) are Extracellular-facing. The helical transmembrane segment at 403–423 (FWIPLGIAITIGTIFIGLVMF) threads the bilayer. At 424 to 444 (EIHRIVSANSKGGVLKLEIKS) the chain is on the cytoplasmic side. The chain crosses the membrane as a helical span at residues 445–465 (ILNVALIYLTFIYLFAFNFYM). Topologically, residues 466 to 497 (NGQEGVVYGQIESFYQCTLENDASECTIQGPS) are extracellular. A helical membrane pass occupies residues 498 to 518 (IGSLGFFIFCIRIYGVYCFIL). The Cytoplasmic portion of the chain corresponds to 519-619 (QGLNYRAYNI…TLKDIEVSKS (101 aa)). Residues 581–605 (LNIDSAFSKNNESDDEDDYDPYKKS) form a disordered region.

Belongs to the G-protein coupled receptor Fz/Smo family.

It localises to the membrane. In Dictyostelium discoideum (Social amoeba), this protein is Frizzled and smoothened-like protein L (fslL).